The following is a 212-amino-acid chain: Translation initiation factor IF-3 (212 aa).

The protein belongs to the IF-3 family. As to quaternary structure, monomer.

The protein resides in the cytoplasm. In terms of biological role, IF-3 binds to the 30S ribosomal subunit and shifts the equilibrium between 70S ribosomes and their 50S and 30S subunits in favor of the free subunits, thus enhancing the availability of 30S subunits on which protein synthesis initiation begins. This chain is Translation initiation factor IF-3, found in Synechococcus sp. (strain CC9311).